Consider the following 339-residue polypeptide: 3-isopropylmalate dehydrogenase (339 aa).

Substrate-binding residues include Arg-88, Arg-98, Arg-122, and Asp-212. Residues Asp-212, Asp-236, and Asp-240 each coordinate Mg(2+). 272–284 lines the NAD(+) pocket; it reads GSAPDIAGKGIAD.

Belongs to the isocitrate and isopropylmalate dehydrogenases family. LeuB type 2 subfamily. As to quaternary structure, homodimer. It depends on Mg(2+) as a cofactor. Requires Mn(2+) as cofactor.

It is found in the cytoplasm. It carries out the reaction (2R,3S)-3-isopropylmalate + NAD(+) = 4-methyl-2-oxopentanoate + CO2 + NADH. It functions in the pathway amino-acid biosynthesis; L-leucine biosynthesis; L-leucine from 3-methyl-2-oxobutanoate: step 3/4. Its function is as follows. Catalyzes the oxidation of 3-carboxy-2-hydroxy-4-methylpentanoate (3-isopropylmalate) to 3-carboxy-4-methyl-2-oxopentanoate. The product decarboxylates to 4-methyl-2 oxopentanoate. The protein is 3-isopropylmalate dehydrogenase of Corynebacterium aurimucosum (strain ATCC 700975 / DSM 44827 / CIP 107346 / CN-1) (Corynebacterium nigricans).